The chain runs to 341 residues: Biotin synthase (341 aa).

One can recognise a Radical SAM core domain in the interval 40-267 (AEIQVSTLLS…RSMVRLSAGR (228 aa)). 3 residues coordinate [4Fe-4S] cluster: C55, C59, and C62. [2Fe-2S] cluster is bound by residues C99, C130, C190, and R262.

This sequence belongs to the radical SAM superfamily. Biotin synthase family. In terms of assembly, homodimer. Requires [4Fe-4S] cluster as cofactor. The cofactor is [2Fe-2S] cluster.

It carries out the reaction (4R,5S)-dethiobiotin + (sulfur carrier)-SH + 2 reduced [2Fe-2S]-[ferredoxin] + 2 S-adenosyl-L-methionine = (sulfur carrier)-H + biotin + 2 5'-deoxyadenosine + 2 L-methionine + 2 oxidized [2Fe-2S]-[ferredoxin]. It participates in cofactor biosynthesis; biotin biosynthesis; biotin from 7,8-diaminononanoate: step 2/2. Functionally, catalyzes the conversion of dethiobiotin (DTB) to biotin by the insertion of a sulfur atom into dethiobiotin via a radical-based mechanism. The sequence is that of Biotin synthase from Xylella fastidiosa (strain 9a5c).